Here is a 218-residue protein sequence, read N- to C-terminus: Copper acquisition factor BIM1 (218 aa).

The N-terminal stretch at 1-19 (MFALKSILVTSLITSTALA) is a signal peptide. 2 residues coordinate Cu(2+): His-20 and His-65. 3 N-linked (GlcNAc...) asparagine glycosylation sites follow: Asn-87, Asn-91, and Asn-124. Asp-138 is a Cu(2+) binding site. Asn-158 and Asn-170 each carry an N-linked (GlcNAc...) asparagine glycan. The interval 160-194 (TCTNDASKASNATSTSSGSATATSAAATSSSSGTS) is disordered. The segment covering 165–194 (ASKASNATSTSSGSATATSAAATSSSSGTS) has biased composition (low complexity). The GPI-anchor amidated serine moiety is linked to residue Ser-190. A propeptide spans 191–218 (SGTSGAIKEVVGFGALSLALGIAGLIIL) (removed in mature form).

This sequence belongs to the X325 family. In terms of assembly, interacts with the CUF1-dependent copper transporter CTR1. Cu(2+) is required as a cofactor.

The protein localises to the cell membrane. Its function is as follows. Lytic polysaccharide monooxygenase-like protein that has diverged to biological functions other than polysaccharide degradation since it does not perform oxidative cleavage of polysaccharides. Cell surface-bound protein that functions in the copper-accumulation pathway shared by the CUF1-dependent copper transporter CTR1. Involved in maintaining cell wall integrity during copper deficiency. Binds Cu(2+) with an estimated 1:1 stoichiometry and might serve as an extracellular copper ligand. FRE4 and FRE7 metalloreductases probably function together with CTR1 and BIM1 to liberate the Cu(2+) bound to the BIM1 copper-binding site for subsequent import of Cu(+) into the cell by CTR1, via the reduction of BIM1-bound Cu(2+) to Cu(+) to reduce binding affinity for BIM1 but increase affinity for CTR1. Facilitates copper acquisition in the brain of mammalian hosts and acts as a copper-dependent virulence trait in fungal meningitis. While BIM1 plays a critical role in cryptococcal meningitis, at least in part through its role in copper acquisition, it could play additional roles during copper limitation or as a means to invade and colonize host tissues in the brain, by compromising host carbohydrate integrity via its lytic polysaccharide monooxygenase (LPMO) activity, which has still to be determined. This is Copper acquisition factor BIM1 from Cryptococcus neoformans var. grubii serotype A (strain H99 / ATCC 208821 / CBS 10515 / FGSC 9487) (Filobasidiella neoformans var. grubii).